Consider the following 148-residue polypeptide: UPF0260 protein KPN78578_22800 (148 aa).

Belongs to the UPF0260 family.

The protein is UPF0260 protein KPN78578_22800 of Klebsiella pneumoniae subsp. pneumoniae (strain ATCC 700721 / MGH 78578).